Consider the following 319-residue polypeptide: Biotin synthase (319 aa).

Residues 44–273 (IHGDGIDLCS…EAKIRLAGGR (230 aa)) enclose the Radical SAM core domain. Residues Cys62, Cys66, and Cys69 each contribute to the [4Fe-4S] cluster site. [2Fe-2S] cluster contacts are provided by Ser106, Cys138, Cys198, and Arg268.

This sequence belongs to the radical SAM superfamily. Biotin synthase family. Homodimer. The cofactor is [4Fe-4S] cluster. [2Fe-2S] cluster is required as a cofactor.

It carries out the reaction (4R,5S)-dethiobiotin + (sulfur carrier)-SH + 2 reduced [2Fe-2S]-[ferredoxin] + 2 S-adenosyl-L-methionine = (sulfur carrier)-H + biotin + 2 5'-deoxyadenosine + 2 L-methionine + 2 oxidized [2Fe-2S]-[ferredoxin]. Its pathway is cofactor biosynthesis; biotin biosynthesis; biotin from 7,8-diaminononanoate: step 2/2. Functionally, catalyzes the conversion of dethiobiotin (DTB) to biotin by the insertion of a sulfur atom into dethiobiotin via a radical-based mechanism. The protein is Biotin synthase of Clostridium perfringens (strain 13 / Type A).